The following is a 634-amino-acid chain: uncharacterized protein (634 aa).

The first 40 residues, 1–40 (MWLQQRLKGLPGLLSSSWARRLLCLLGLLVLLLWFAGSGA), serve as a signal peptide directing secretion. The Extracellular portion of the chain corresponds to 41–589 (RRAAGGLQLL…DEHMAQQDPG (549 aa)). N-linked (GlcNAc...) asparagine glycosylation occurs at Asn363. Residues 590 to 610 (LPFLFWFSVASLITLFHLFLF) form a helical membrane-spanning segment. Residues 611 to 634 (KLIYNEYCGPGAKPFFRNKEDPSV) are Cytoplasmic-facing.

The protein resides in the membrane. This is an uncharacterized protein from Bos taurus (Bovine).